Here is a 490-residue protein sequence, read N- to C-terminus: One cut domain family member 3 (490 aa).

3 disordered regions span residues 130–155, 193–213, and 287–316; these read GAHG…QRLA, LSPL…PPPP, and HGPH…AAAE. Pro residues predominate over residues 143–152; that stretch reads ATAPPPPPPQ. A compositionally biased stretch (gly residues) spans 290–311; sequence HSGGGGPGGGGGAGGGSGGPGA. Positions 309–395 form a DNA-binding region, CUT; sequence PGAGAAAEEI…QRMSALRLAA (87 aa). Positions 411 to 470 form a DNA-binding region, homeobox; sequence PKKQRLVFTDLQRRTLIAIFKENKRPSKEMQATISQQLGLELNTVSNFFMNARRRCMNRW.

This sequence belongs to the CUT homeobox family. As to expression, specifically expressed in brain, stomach and gut. Within the gut, expressed only in duodenum and jejunum.

It is found in the nucleus. Functionally, transcriptional activator. Binds the consensus DNA sequence 5'-DHWATTGAYTWWD-3' on a variety of gene promoters such as those of HNF3B and TTR. The polypeptide is One cut domain family member 3 (Onecut3) (Mus musculus (Mouse)).